The primary structure comprises 496 residues: Glycerol kinase (496 aa).

T11 contacts ADP. ATP-binding residues include T11, T12, and S13. T11 lines the sn-glycerol 3-phosphate pocket. R15 provides a ligand contact to ADP. Sn-glycerol 3-phosphate is bound by residues R81, E82, Y133, and D242. The glycerol site is built by R81, E82, Y133, D242, and Q243. 2 residues coordinate ADP: T264 and G307. Residues T264, G307, and Q311 each contribute to the ATP site. N413 contacts ADP.

This sequence belongs to the FGGY kinase family.

The catalysed reaction is glycerol + ATP = sn-glycerol 3-phosphate + ADP + H(+). Its pathway is polyol metabolism; glycerol degradation via glycerol kinase pathway; sn-glycerol 3-phosphate from glycerol: step 1/1. With respect to regulation, inhibited by fructose 1,6-bisphosphate (FBP). In terms of biological role, key enzyme in the regulation of glycerol uptake and metabolism. Catalyzes the phosphorylation of glycerol to yield sn-glycerol 3-phosphate. The polypeptide is Glycerol kinase (Borrelia duttonii (strain Ly)).